The sequence spans 1104 residues: Transposon Ty4-P Gag-Pol polyprotein (1104 aa).

The stretch at 48-112 forms a coiled coil; the sequence is VKQYQRNLNR…VEKIQLLETN (65 aa). The tract at residues 381–501 is ty4 protease; sequence QQQLKSSAKE…KTKMVLSRKY (121 aa). Catalysis depends on Asp-414, which acts as the For protease activity; shared with dimeric partner. The tract at residues 539-599 is integrase-type zinc finger-like; it reads AIKPTSSPGF…EPNEFWCQTC (61 aa). Residues 619–786 enclose the Integrase catalytic domain; that stretch reads TDHEPGSSWC…LPLKAISRQP (168 aa). Asp-630 and Asp-695 together coordinate Mg(2+).

The protease is a homodimer, whose active site consists of two apposed aspartic acid residues. Post-translationally, proteolytically processed into capsid protein (CA), Ty4 protease (PR), integrase (IN) and reverse transcriptase/ribonuclease H (RT) proteins. Initially, virus-like particles (VLPs) are composed of the structural unprocessed proteins Gag and Gag-Pol, and also contain the host initiator methionine tRNA (tRNA(i)-Met) which serves as a primer for minus-strand DNA synthesis, and a dimer of genomic Ty RNA. Processing of the polyproteins occurs within the particle and proceeds by an ordered pathway, called maturation. First, the protease (PR) is released by autocatalytic cleavage of the Gag-Pol polyprotein, and this cleavage is a prerequisite for subsequent processing at the remaining sites to release the mature structural and catalytic proteins. Maturation takes place prior to the RT reaction and is required to produce transposition-competent VLPs.

The protein localises to the cytoplasm. It localises to the nucleus. It catalyses the reaction DNA(n) + a 2'-deoxyribonucleoside 5'-triphosphate = DNA(n+1) + diphosphate. It carries out the reaction Endonucleolytic cleavage to 5'-phosphomonoester.. Capsid protein (CA) is the structural component of the virus-like particle (VLP), forming the shell that encapsulates the retrotransposons dimeric RNA genome. Functionally, the aspartyl protease (PR) mediates the proteolytic cleavages of the Gag and Gag-Pol polyproteins after assembly of the VLP. In terms of biological role, reverse transcriptase/ribonuclease H (RT) is a multifunctional enzyme that catalyzes the conversion of the retro-elements RNA genome into dsDNA within the VLP. The enzyme displays a DNA polymerase activity that can copy either DNA or RNA templates, and a ribonuclease H (RNase H) activity that cleaves the RNA strand of RNA-DNA heteroduplexes during plus-strand synthesis and hydrolyzes RNA primers. The conversion leads to a linear dsDNA copy of the retrotransposon that includes long terminal repeats (LTRs) at both ends. Its function is as follows. Integrase (IN) targets the VLP to the nucleus, where a subparticle preintegration complex (PIC) containing at least integrase and the newly synthesized dsDNA copy of the retrotransposon must transit the nuclear membrane. Once in the nucleus, integrase performs the integration of the dsDNA into the host genome. The chain is Transposon Ty4-P Gag-Pol polyprotein (TY4B-P) from Saccharomyces cerevisiae (strain ATCC 204508 / S288c) (Baker's yeast).